The sequence spans 354 residues: Holliday junction branch migration complex subunit RuvB (354 aa).

Residues Thr-4–Tyr-190 are large ATPase domain (RuvB-L). ATP-binding positions include Leu-29, Arg-30, Gly-71, Lys-74, Thr-75, Thr-76, Glu-137 to Tyr-139, Arg-180, Tyr-190, and Arg-227. Thr-75 lines the Mg(2+) pocket. The interval Asp-191–Asp-261 is small ATPAse domain (RuvB-S). The tract at residues Pro-264–Lys-354 is head domain (RuvB-H). Residues Arg-300, Arg-319, and Arg-324 each coordinate DNA.

Belongs to the RuvB family. Homohexamer. Forms an RuvA(8)-RuvB(12)-Holliday junction (HJ) complex. HJ DNA is sandwiched between 2 RuvA tetramers; dsDNA enters through RuvA and exits via RuvB. An RuvB hexamer assembles on each DNA strand where it exits the tetramer. Each RuvB hexamer is contacted by two RuvA subunits (via domain III) on 2 adjacent RuvB subunits; this complex drives branch migration. In the full resolvosome a probable DNA-RuvA(4)-RuvB(12)-RuvC(2) complex forms which resolves the HJ.

The protein resides in the cytoplasm. The catalysed reaction is ATP + H2O = ADP + phosphate + H(+). Its function is as follows. The RuvA-RuvB-RuvC complex processes Holliday junction (HJ) DNA during genetic recombination and DNA repair, while the RuvA-RuvB complex plays an important role in the rescue of blocked DNA replication forks via replication fork reversal (RFR). RuvA specifically binds to HJ cruciform DNA, conferring on it an open structure. The RuvB hexamer acts as an ATP-dependent pump, pulling dsDNA into and through the RuvAB complex. RuvB forms 2 homohexamers on either side of HJ DNA bound by 1 or 2 RuvA tetramers; 4 subunits per hexamer contact DNA at a time. Coordinated motions by a converter formed by DNA-disengaged RuvB subunits stimulates ATP hydrolysis and nucleotide exchange. Immobilization of the converter enables RuvB to convert the ATP-contained energy into a lever motion, pulling 2 nucleotides of DNA out of the RuvA tetramer per ATP hydrolyzed, thus driving DNA branch migration. The RuvB motors rotate together with the DNA substrate, which together with the progressing nucleotide cycle form the mechanistic basis for DNA recombination by continuous HJ branch migration. Branch migration allows RuvC to scan DNA until it finds its consensus sequence, where it cleaves and resolves cruciform DNA. In Burkholderia ambifaria (strain MC40-6), this protein is Holliday junction branch migration complex subunit RuvB.